The chain runs to 961 residues: IQ motif and SEC7 domain-containing protein 1 (961 aa).

Residues 21–113 (SGVEGEAPSS…SLSESYELSS (93 aa)) are disordered. A compositionally biased stretch (polar residues) spans 29–38 (SSETGTSLDS). Phosphoserine occurs at positions 88, 104, and 106. In terms of domain architecture, IQ spans 133 to 162 (TRHAARTIQTAFRQYQMNKNFERLRSSMSE). Residues Ser179, Ser247, and Ser251 each carry the phosphoserine modification. Disordered stretches follow at residues 263-291 (SEEV…HRKL), 310-332 (LSPP…DLRL), and 347-515 (KEDK…DSPA). Over residues 272 to 291 (ARARDTEPKPGLHGMDHRKL) the composition is skewed to basic and acidic residues. 2 stretches are compositionally biased toward basic and acidic residues: residues 364–374 (ERPEPRLRVEH) and 428–444 (LPRE…RPLE). The segment covering 469–487 (DSINSTSNSNDTINCSSES) has biased composition (low complexity). Phosphoserine is present on residues Ser510 and Ser513. The SEC7 domain occupies 515-708 (AFSNDVIRKR…IGIYERIRKR (194 aa)). A PH domain is found at 772 to 864 (HQREIFLFND…LRESVAEVQE (93 aa)). A coiled-coil region spans residues 846–877 (QDRKKFTDDLRESVAEVQEMEKHRIESELEKQ). Ser890 carries the phosphoserine modification. Tyr909 is modified (phosphotyrosine). Residues 920 to 961 (LSSSLRDLSEAGKRGRRSSAGSLESNVEFQPFQPPQPPVLCS) are disordered. A phosphoserine mark is found at Ser922 and Ser923. Residues 938–947 (SAGSLESNVE) show a composition bias toward polar residues. The span at 951-961 (FQPPQPPVLCS) shows a compositional bias: pro residues.

Belongs to the BRAG family. Interacts with ARF1 and ARF6. Interacts with GRIA2; the interaction is required for ARF6 activation. In terms of tissue distribution, expressed in hippocampus.

It localises to the cytoplasm. Its subcellular location is the nucleus. The protein resides in the postsynaptic density. It is found in the cytoplasmic vesicle. The protein localises to the secretory vesicle. It localises to the synaptic vesicle. Its function is as follows. Guanine nucleotide exchange factor for ARF1 and ARF6. Guanine nucleotide exchange factor activity is enhanced by lipid binding. Accelerates GTP binding by ARFs of all three classes. Guanine nucleotide exchange protein for ARF6, mediating internalization of beta-1 integrin. Involved in neuronal development. In neurons, plays a role in the control of vesicle formation by endocytoc cargo. Upon long term depression, interacts with GRIA2 and mediates the activation of ARF6 to internalize synaptic AMPAR receptors. The protein is IQ motif and SEC7 domain-containing protein 1 (Iqsec1) of Mus musculus (Mouse).